A 1090-amino-acid polypeptide reads, in one-letter code: Neurofilament heavy polypeptide (1090 aa).

Positions 2–98 (MSFGSADALL…AVAARSEKEQ (97 aa)) are head. Ser74 and Ser122 each carry phosphoserine. Residues 95–411 (EKEQLQALND…KLLEGEECRI (317 aa)) form the IF rod domain. Positions 99 to 130 (LQALNDRFAGYIDKVRQLEAHNRSLEGEAAAL) are coil 1A. The segment at 131–143 (RQQQAGRAAMGEL) is linker 1. The tract at residues 144 to 242 (YEREVREMRG…QEEVGELLGQ (99 aa)) is coil 1B. The segment at 243–264 (IQGCGAAQAQAQAEARDALKCD) is linker 12. The interval 265–286 (VTSALREIRAQLEGHAVQSTLQ) is coil 2A. The linker 2 stretch occupies residues 287 to 290 (SEEW). Residues 291–411 (FRVRLDRLSE…KLLEGEECRI (121 aa)) are coil 2B. Ser345, Ser416, and Ser419 each carry phosphoserine. Residues 412–1090 (GFGPSPFSLT…TEDKATKGEK (679 aa)) form a tail region. The tract at residues 456-1090 (EGQTEEIRVT…TEDKATKGEK (635 aa)) is disordered. Residues 468-495 (VTEEEDKEAQGQEGEEAEEGEEKEEEEG) are compositionally biased toward acidic residues. Over residues 496–506 (AAATSPPAEEA) the composition is skewed to low complexity. Ser508, Ser523, Ser529, Ser535, Ser541, Ser547, Ser553, Ser559, Ser565, Ser571, Ser577, Ser583, Ser589, Ser595, Ser601, Ser607, Ser613, Ser619, Ser625, Ser631, Ser637, Ser643, Ser649, Ser655, Ser661, Ser667, Ser673, Ser679, Ser685, Ser691, Ser697, Ser703, Ser709, Ser715, Ser721, Ser727, Ser733, Ser739, Ser745, Ser751, Ser757, Ser763, and Ser769 each carry phosphoserine. A compositionally biased stretch (basic and acidic residues) spans 508-579 (SPEKETKSRV…KSPAEAKSPA (72 aa)). Repeat copies occupy residues 522 to 527 (KSPGEA), 528 to 533 (KSPGEA), 534 to 539 (KSPAEA), 540 to 545 (KSPGEA), 546 to 551 (KSPGEA), 552 to 557 (KSPGEA), 558 to 563 (KSPAEP), 564 to 569 (KSPAEP), 570 to 575 (KSPAEA), 576 to 581 (KSPAEP), 582 to 587 (KSPATV), 588 to 593 (KSPGEA), 594 to 599 (KSPSEA), 600 to 605 (KSPAEA), 606 to 611 (KSPAEA), 612 to 617 (KSPAEA), 618 to 623 (KSPAEA), 624 to 629 (KSPAEA), 630 to 635 (KSPAEA), 636 to 641 (KSPATV), 642 to 647 (KSPGEA), 648 to 653 (KSPSEA), 654 to 659 (KSPAEA), 660 to 665 (KSPAEA), 666 to 671 (KSPAEA), 672 to 677 (KSPAEV), 678 to 683 (KSPGEA), 684 to 689 (KSPAEP), 690 to 695 (KSPAEA), 696 to 701 (KSPAEV), 702 to 707 (KSPAEA), 708 to 713 (KSPAEV), 714 to 719 (KSPGEA), 720 to 725 (KSPAAV), 726 to 731 (KSPAEA), 732 to 737 (KSPAAV), 738 to 743 (KSPGEA), 744 to 749 (KSPGEA), 750 to 755 (KSPAEA), 756 to 761 (KSPAEA), 762 to 767 (KSPIEV), and 768 to 773 (KSPEKA). The tract at residues 522–892 (KSPGEAKSPG…KEEVKSPVKE (371 aa)) is 52 X 6 AA approximate tandem repeats of K-S-P-[AGISV]-[EATK]-[APVQ]. Residues 595 to 633 (SPSEAKSPAEAKSPAEAKSPAEAKSPAEAKSPAEAKSPA) show a composition bias toward basic and acidic residues. Over residues 649–717 (SPSEAKSPAE…KSPAEVKSPG (69 aa)) the composition is skewed to basic and acidic residues. Basic and acidic residues predominate over residues 745 to 781 (SPGEAKSPAEAKSPAEAKSPIEVKSPEKAKTPVKEGA). The stretch at 774-779 (KTPVKE) is one 43; approximate repeat. 6 consecutive repeat copies span residues 782–787 (KSPAEA), 788–793 (KSPEKA), 794–799 (KSPVKE), 808–813 (KSPEKA), 814–819 (KSPVKE), and 833–838 (KSPEAQ). Phosphoserine is present on residues Ser783, Ser789, Ser795, Ser809, Ser815, and Ser834. The span at 788–834 (KSPEKAKSPVKEDIKPPAEAKSPEKAKSPVKEGAKPPEKAKPLDVKS) shows a compositional bias: basic and acidic residues. At Thr839 the chain carries Phosphothreonine. Basic and acidic residues-rich tracts occupy residues 843–964 (EEAK…KAVA) and 974–1090 (GVKE…KGEK). 3 tandem repeats follow at residues 858-863 (KSPAKE), 866-871 (KSPEKE), and 887-892 (KSPVKE). Phosphoserine is present on residues Ser859, Ser867, Ser888, and Ser947.

The protein belongs to the intermediate filament family. As to quaternary structure, forms heterodimers with NEFL; which can further hetero-oligomerize (in vitro). Forms heterodimers with INA (in vitro). Post-translationally, there are a number of repeats of the tripeptide K-S-P, NFH is phosphorylated on a number of the serines in this motif. It is thought that phosphorylation of NFH results in the formation of interfilament cross bridges that are important in the maintenance of axonal caliber. Phosphorylation seems to play a major role in the functioning of the larger neurofilament polypeptides (NF-M and NF-H), the levels of phosphorylation being altered developmentally and coincidentally with a change in the neurofilament function. In terms of processing, phosphorylated in the head and rod regions by the PKC kinase PKN1, leading to the inhibition of polymerization. In terms of tissue distribution, expressed in the sciatic nerve (at protein level).

It is found in the cytoplasm. Its subcellular location is the cytoskeleton. The protein resides in the cell projection. The protein localises to the axon. Neurofilaments usually contain three intermediate filament proteins: NEFL, NEFM, and NEFH which are involved in the maintenance of neuronal caliber. NEFH has an important function in mature axons that is not subserved by the two smaller NF proteins. May additionally cooperate with the neuronal intermediate filament proteins PRPH and INA to form neuronal filamentous networks. The chain is Neurofilament heavy polypeptide (Nefh) from Mus musculus (Mouse).